Reading from the N-terminus, the 274-residue chain is Large ribosomal subunit protein uL2cz/uL2cy (274 aa).

Positions 225 to 274 (NPVDHPHGGGEGRAPIGRKKPTTPWGYPALGRRSRKRKKYSDSFILRRRK) are disordered.

The protein belongs to the universal ribosomal protein uL2 family. Part of the 50S ribosomal subunit.

Its subcellular location is the plastid. The protein resides in the chloroplast. The polypeptide is Large ribosomal subunit protein uL2cz/uL2cy (rpl2-A) (Dioscorea elephantipes (Elephant's foot yam)).